We begin with the raw amino-acid sequence, 202 residues long: Outer-membrane lipoprotein carrier protein (202 aa).

The N-terminal stretch at 1 to 20 (MKKQLLIGSVLLVASSQVWA) is a signal peptide.

It belongs to the LolA family. Monomer.

Its subcellular location is the periplasm. Participates in the translocation of lipoproteins from the inner membrane to the outer membrane. Only forms a complex with a lipoprotein if the residue after the N-terminal Cys is not an aspartate (The Asp acts as a targeting signal to indicate that the lipoprotein should stay in the inner membrane). The polypeptide is Outer-membrane lipoprotein carrier protein (Aeromonas salmonicida (strain A449)).